The chain runs to 611 residues: MNKIRFLDKYLVQKIAAGESIDRPCSILRELLDNSIDSGATKIEVFLEEGGIQKILIIDNGSGISQEDLKICYLPHTTSKISSEEDLRKIETLGFRGEALSSIAICSNISITSSTTGNESYQIEVENGIEKCFKKQPAINGTIVDVTKIFHNFPARKRFLKQEPIETKMCLKVLEEKIITHPEINFEINLNQKLRKIYFKESLIDRVQNVYGNVIENNKFKVLKKEHENIKIEIFLAPANFSKKSKRHIKTFVNRRPIDQKDLLEAITNGHSRILSPGNFPICYLFLEINPEYIDFNVHPQKKEVRFFNLPFLFKLISDNINNFFDKDTNNYHDVIIKRQLTDDDHLIEMINQSENFNKTSTYDVPQNKNLETEDNTNEPNKNMIQKDVGLRKYNSIIENRPSLKENITNIFSDSFLEFEEPPNKNEEEDIKFNYIGQIFSEFLIVEKANEIYFIDQHAVHEKIIYEKLRNSKKTIQKLLIPIEFTIVDKNIEKIIDSEIEEYKKMDIIISKIGSEKYQLESIPNICNQYENTLINFFQSRRSRTINSLESDLYATIACRKAVKTNDILSVEFSKYLINEFFKLEIKHCPHGRKIYYKISKFELEKKVDRA.

The protein belongs to the DNA mismatch repair MutL/HexB family.

In terms of biological role, this protein is involved in the repair of mismatches in DNA. It is required for dam-dependent methyl-directed DNA mismatch repair. May act as a 'molecular matchmaker', a protein that promotes the formation of a stable complex between two or more DNA-binding proteins in an ATP-dependent manner without itself being part of a final effector complex. This chain is DNA mismatch repair protein MutL, found in Borreliella afzelii (strain PKo) (Borrelia afzelii).